An 868-amino-acid polypeptide reads, in one-letter code: Receptor-like protein 32 (868 aa).

Residues 1–32 form the signal peptide; it reads MKDSWNSTSIIPFTFSSLIFFLFTFDFQDVFG. Residues 33–815 lie on the Extracellular side of the membrane; that stretch reads VPTKHLCRLE…PPELEEEDRE (783 aa). N-linked (GlcNAc...) asparagine glycans are attached at residues Asn73, Asn109, Asn141, and Asn165. LRR repeat units follow at residues 118-142, 143-166, 168-188, 189-213, 214-237, 239-261, 262-285, 287-310, 312-334, 335-360, 362-385, 389-412, 413-436, 438-459, 465-489, 490-515, 517-538, 540-560, 561-586, 588-606, 607-630, 675-699, 700-723, 724-747, and 749-772; these read LRFL…IENF, SHLT…IGNL, QLTF…FFGN, MNQL…LLNL, KHLS…MSSL, NLEY…LFTI, ASLT…NISS, STLT…ISKF, NLQD…IFTN, LKSL…LFSS, LNSI…SVAD, TQLI…LRSQ, HKMT…LWTL, KLIF…TEHG, KPSM…ICAL, RSLI…NLKS, LSFL…IFKS, RSLD…FIRL, SALE…SLKK, QVLV…HASF, HTLR…YFVN, LKIY…IGLL, KELH…MGNL, RELE…LGNL, and YLAY…QFRR. N-linked (GlcNAc...) asparagine glycosylation is present at Asn233. N-linked (GlcNAc...) asparagine glycosylation is found at Asn275 and Asn282. 2 N-linked (GlcNAc...) asparagine glycosylation sites follow: Asn342 and Asn347. Residues Asn477 and Asn503 are each glycosylated (N-linked (GlcNAc...) asparagine). Residue Asn574 is glycosylated (N-linked (GlcNAc...) asparagine). The N-linked (GlcNAc...) asparagine glycan is linked to Asn613. Asn706, Asn746, Asn754, and Asn774 each carry an N-linked (GlcNAc...) asparagine glycan. Residues 816–836 form a helical membrane-spanning segment; it reads VFSWIAAAIGFGPGIAFGLTI. Over 837-868 the chain is Cytoplasmic; that stretch reads RYILVFYKPDWFMHTFGHLQPSAHEKRLRRKQ.

This sequence belongs to the RLP family.

Its subcellular location is the cell membrane. The polypeptide is Receptor-like protein 32 (Arabidopsis thaliana (Mouse-ear cress)).